A 511-amino-acid polypeptide reads, in one-letter code: Lysine--tRNA ligase 2 (511 aa).

Residues 1-22 form a disordered region; it reads MTMEINNTDPFEKMPLPDDSGL. Glu-421 and Glu-428 together coordinate Mg(2+).

The protein belongs to the class-II aminoacyl-tRNA synthetase family. Homodimer. The cofactor is Mg(2+).

Its subcellular location is the cytoplasm. It carries out the reaction tRNA(Lys) + L-lysine + ATP = L-lysyl-tRNA(Lys) + AMP + diphosphate. The chain is Lysine--tRNA ligase 2 from Methanosarcina mazei (strain ATCC BAA-159 / DSM 3647 / Goe1 / Go1 / JCM 11833 / OCM 88) (Methanosarcina frisia).